A 346-amino-acid polypeptide reads, in one-letter code: MKIKKAAVIGAGVMGAAIAAQLANAGIPVLLLDIVLPDKPDRNFLAKAGVERALKARPAAFMDNDRARLIEVGNLEDDLKKLKDVDWVLEAIIEKLDAKHDLWEKVEKVVKKTAIISSNSSGIPMHLQIEGRSEDFQRRFVGAHFFNPPRYLHLLEVIPTDKTDPQVVKDFSEFAEHTLGKGVVVANDVPGFVANRIGVYGIVRAMQHMEKYGLTPAEVDQLTGPALGRASSATFRTADLSGLDIISHVATDIGGVTPDDEDFTLTESFKNMVAGGILGDKSGSGFYKKTKDEKARPRFSTTCKPANTKTRARCACPPWTPRANLSPSATPCTPWKARKATSCAPP.

Positions 322–346 (RANLSPSATPCTPWKARKATSCAPP) are disordered.

It belongs to the 3-hydroxyacyl-CoA dehydrogenase family.

It catalyses the reaction a (3S)-3-hydroxyacyl-CoA + NAD(+) = a 3-oxoacyl-CoA + NADH + H(+). In Deinococcus radiodurans (strain ATCC 13939 / DSM 20539 / JCM 16871 / CCUG 27074 / LMG 4051 / NBRC 15346 / NCIMB 9279 / VKM B-1422 / R1), this protein is Probable 3-hydroxyacyl-CoA dehydrogenase.